The chain runs to 199 residues: Chaperone protein TorD (199 aa).

Belongs to the TorD/DmsD family. TorD subfamily.

The protein resides in the cytoplasm. Its function is as follows. Involved in the biogenesis of TorA. Acts on TorA before the insertion of the molybdenum cofactor and, as a result, probably favors a conformation of the apoenzyme that is competent for acquiring the cofactor. The chain is Chaperone protein TorD from Escherichia coli O139:H28 (strain E24377A / ETEC).